The sequence spans 358 residues: Peptide chain release factor 1 (358 aa).

At Gln-233 the chain carries N5-methylglutamine.

The protein belongs to the prokaryotic/mitochondrial release factor family. In terms of processing, methylated by PrmC. Methylation increases the termination efficiency of RF1.

The protein resides in the cytoplasm. Functionally, peptide chain release factor 1 directs the termination of translation in response to the peptide chain termination codons UAG and UAA. The polypeptide is Peptide chain release factor 1 (Geobacillus kaustophilus (strain HTA426)).